The sequence spans 293 residues: MATH domain and coiled-coil domain-containing protein At3g58400 (293 aa).

The MATH domain occupies 3–126; it reads RSRSQNLITE…NGELKIVAEI (124 aa). The stretch at 227-285 forms a coiled coil; the sequence is KLDWLENKLYEVAQKKEDDEAGETRLREMEEKLKDLKLKCSKMEALVEEEKAKVSAAKA.

The chain is MATH domain and coiled-coil domain-containing protein At3g58400 from Arabidopsis thaliana (Mouse-ear cress).